A 151-amino-acid polypeptide reads, in one-letter code: Caveolin-3 (151 aa).

Residues 1-83 (MMTEEHTDLE…RLLSTLLGVP (83 aa)) lie on the Cytoplasmic side of the membrane. K38 participates in a covalent cross-link: Glycyl lysine isopeptide (Lys-Gly) (interchain with G-Cter in SUMO3). The helical intramembrane region spans 84–104 (LALLWGFLFACISFCHIWAVV). Topologically, residues 105–151 (PCIKSYLIEIQCISHIYSLCIRTFCNPLFAALGQVCSNIKVVLRREG) are cytoplasmic.

The protein belongs to the caveolin family. As to quaternary structure, homooligomer. Interacts with DYSF. Interacts with DLG1 and KCNA5; forms a ternary complex. Interacts with DAG1 (via its C-terminal); the interaction prevents binding of DAG1 with DMD. Interacts with TRIM72. Interacts with MUSK; may regulate MUSK signaling. Interacts with POPDC1. Interacts with CAVIN1, CAVIN2 and CAVIN4. In terms of processing, sumoylation with SUMO3 by PIAS4 may reduce agonist-induced internalization and desensitization of adrenergic receptor ABRD2. Expressed predominantly in muscle.

The protein resides in the golgi apparatus membrane. It is found in the cell membrane. It localises to the membrane. The protein localises to the caveola. Its subcellular location is the sarcolemma. Functionally, may act as a scaffolding protein within caveolar membranes. Interacts directly with G-protein alpha subunits and can functionally regulate their activity. May also regulate voltage-gated potassium channels. Plays a role in the sarcolemma repair mechanism of both skeletal muscle and cardiomyocytes that permits rapid resealing of membranes disrupted by mechanical stress. Mediates the recruitment of CAVIN2 and CAVIN3 proteins to the caveolae. The protein is Caveolin-3 (Cav3) of Rattus norvegicus (Rat).